A 121-amino-acid polypeptide reads, in one-letter code: Basic phospholipase A2 homolog zhaoermiatoxin (121 aa).

7 cysteine pairs are disulfide-bonded: cysteine 26–cysteine 115, cysteine 28–cysteine 44, cysteine 43–cysteine 95, cysteine 49–cysteine 121, cysteine 50–cysteine 88, cysteine 57–cysteine 81, and cysteine 75–cysteine 86.

It belongs to the phospholipase A2 family. Group II subfamily. R49 sub-subfamily. As to quaternary structure, homodimer. As to expression, expressed by the venom gland.

Its subcellular location is the secreted. Its function is as follows. Snake venom phospholipase A2 homolog that induces myonecrosis, and edema. Has low myotoxic activity. The sequence is that of Basic phospholipase A2 homolog zhaoermiatoxin from Protobothrops mangshanensis (Mangshan pitviper).